Consider the following 493-residue polypeptide: MSKKGKKPKLPKAPLSEEDQLLIFQQKMLADEEAAKKKERLLTQFLKDKLAKEEHNSALNLNKINTQWRTILREVKTRELHQDIEILSQTFERVVDCKDSVIKSLAKDLTEAEEQYAHALRSHLHNIDQLLTLQRRRLGLLEENYNMELEVLTKEFETERKLIIDHHEKEMHYLQDVFMAMEQNYIDSEYESKLEFQSMWDDLKNKNLEEKHFLRLQLENIVEDLWRRFQDALKNYTDATEDRKIAFEYLKVKDEKSSKEIETQMKKIQKLQETIGILKGKIVAHSREGEWQNQCIRNNKELVHVQLRKLKVQRTQARTLSQENLVKLTLESNATLKALKKVVEKGEKILKLAEICRKFETEEEKVLPFYSSVLTPEEQEEAKLQNPEDITEDLAKIMMDYAGMENFWKRYNKVKLEVLSLQHRRLQLLDISSKLREMLKQYLDGISVSDEVLSHLNPLFVVNHRSNLPQLPPPSAQPVYNVIEAAHIASHIL.

2 coiled-coil regions span residues 99 to 163 (DSVI…RKLI) and 253 to 280 (KDEKSSKEIETQMKKIQKLQETIGILKG).

This sequence belongs to the DRC2 family. In terms of assembly, component of the nexin-dynein regulatory complex (N-DRC). Interacts with DRC1.

The protein resides in the cytoplasm. It localises to the cytoskeleton. The protein localises to the flagellum basal body. Its subcellular location is the cell projection. It is found in the cilium. The protein resides in the flagellum. It localises to the flagellum axoneme. In terms of biological role, component of the nexin-dynein regulatory complex (N-DRC), a key regulator of ciliary/flagellar motility which maintains the alignment and integrity of the distal axoneme and regulates microtubule sliding in motile axonemes. Plays a critical role in the assembly of N-DRC and also stabilizes the assembly of multiple inner dynein arms and radial spokes. Coassembles with DRC1 to form a central scaffold needed for assembly of the N-DRC and its attachment to the outer doublet microtubules. This chain is Dynein regulatory complex subunit 2 (Ccdc65), found in Mus musculus (Mouse).